Here is a 178-residue protein sequence, read N- to C-terminus: MEFLMKKVVFALSALAVVSTSAFAAESGDGTIKFTGEIVDAPCVVSTDSQNQEVVLGQVKKNIFKAIGDKSSSKPFQIKLEDCDITSNTKVNVSFNGVGDTDDATLVSVNTEAGAATGVGIGIYDNANKLVEMNTGKSTTTLAAGQTVLYYTANYVATKDTVTTGYGNAEVDFNLSYE.

A signal peptide spans 1 to 24 (MEFLMKKVVFALSALAVVSTSAFA).

The protein belongs to the fimbrial protein family.

It localises to the fimbrium. This Salmonella typhimurium (strain LT2 / SGSC1412 / ATCC 700720) protein is Long polar fimbria protein A (lpfA).